Here is a 578-residue protein sequence, read N- to C-terminus: Probable ATP-dependent RNA helicase DDX55 homolog (578 aa).

The short motif at 7 to 37 (PVALKTFREKLGPELLEVFDKSYKSFTDVQV) is the Q motif element. The Helicase ATP-binding domain occupies 40-218 (GTHLLNLSDV…VFGLRNAKQV (179 aa)). Position 53-60 (53-60 (SPTGSGKT)) interacts with ATP. Residues 166–169 (DEAD) carry the DEAD box motif. In terms of domain architecture, Helicase C-terminal spans 231 to 393 (TLKNYYVECR…EIKVPTNNSR (163 aa)). The disordered stretch occupies residues 507-557 (AAKDKKRREKEARKLKKMGGRFRNGGGTGRKAEEKKALKRKAEEEDDAQND). A compositionally biased stretch (basic residues) spans 510–526 (DKKRREKEARKLKKMGG). The segment covering 536-549 (RKAEEKKALKRKAE) has biased composition (basic and acidic residues).

It belongs to the DEAD box helicase family. DDX55/SPB4 subfamily.

It catalyses the reaction ATP + H2O = ADP + phosphate + H(+). Probable ATP-binding RNA helicase. This chain is Probable ATP-dependent RNA helicase DDX55 homolog, found in Caenorhabditis elegans.